Consider the following 494-residue polypeptide: Alpha-amylase-related protein (494 aa).

The N-terminal stretch at M1–A20 is a signal peptide. Q21 carries the post-translational modification Pyrrolidone carboxylic acid. An intrachain disulfide couples C48 to C104. N118, Q169, and D178 together coordinate Ca(2+). C157 and C171 are disulfide-bonded. R206 contacts chloride. The Nucleophile role is filled by D208. H212 is a binding site for Ca(2+). E245 acts as the Proton donor in catalysis. Chloride-binding residues include N308 and R343. Intrachain disulfides connect C376-C382, C418-C441, and C448-C460.

It belongs to the glycosyl hydrolase 13 family. In terms of assembly, monomer. Requires Ca(2+) as cofactor. Chloride serves as cofactor.

It localises to the secreted. It catalyses the reaction Endohydrolysis of (1-&gt;4)-alpha-D-glucosidic linkages in polysaccharides containing three or more (1-&gt;4)-alpha-linked D-glucose units.. This is Alpha-amylase-related protein (Amyrel) from Drosophila jambulina (Fruit fly).